A 619-amino-acid chain; its full sequence is 2-succinyl-5-enolpyruvyl-6-hydroxy-3-cyclohexene-1-carboxylate synthase (619 aa).

The segment covering 385–398 (SSAHQSLAATNSDS) has biased composition (polar residues). The interval 385–415 (SSAHQSLAATNSDSSTDDIIENTDEEGSNES) is disordered. Over residues 399–413 (STDDIIENTDEEGSN) the composition is skewed to acidic residues.

It belongs to the TPP enzyme family. MenD subfamily. In terms of assembly, homodimer. It depends on Mg(2+) as a cofactor. Requires Mn(2+) as cofactor. Thiamine diphosphate is required as a cofactor.

The catalysed reaction is isochorismate + 2-oxoglutarate + H(+) = 5-enolpyruvoyl-6-hydroxy-2-succinyl-cyclohex-3-ene-1-carboxylate + CO2. Its pathway is quinol/quinone metabolism; 1,4-dihydroxy-2-naphthoate biosynthesis; 1,4-dihydroxy-2-naphthoate from chorismate: step 2/7. The protein operates within quinol/quinone metabolism; menaquinone biosynthesis. Functionally, catalyzes the thiamine diphosphate-dependent decarboxylation of 2-oxoglutarate and the subsequent addition of the resulting succinic semialdehyde-thiamine pyrophosphate anion to isochorismate to yield 2-succinyl-5-enolpyruvyl-6-hydroxy-3-cyclohexene-1-carboxylate (SEPHCHC). This is 2-succinyl-5-enolpyruvyl-6-hydroxy-3-cyclohexene-1-carboxylate synthase from Haloquadratum walsbyi (strain DSM 16790 / HBSQ001).